We begin with the raw amino-acid sequence, 609 residues long: Kelch-like protein 20 (609 aa).

A BTB domain is found at 68–135; the sequence is CDVVLVVGAK…AYTSQITVEE (68 aa). The BACK domain maps to 170–272; the sequence is CLGIRAFADT…SPKFLVGTVG (103 aa). Kelch repeat units lie at residues 319-365, 367-413, 414-460, 462-507, 509-554, and 556-601; these read VLFA…VLDD, LYAV…VLGG, FLYA…VLGG, LYAV…VYQD, IYAV…VVNG, and LMAV…VIKM.

As to quaternary structure, component of the BCR(KLHL20) E3 ubiquitin ligase complex, at least composed of CUL3, KLHL20 and RBX1. Interacts with PDZ-RhoGEF/ARHGEF11, DAPK1, PML and CORO7. Interacts with F-actin. Interacts with IFN-gamma (IFNG). Interacts (via kelch repeats) with IVNS1ABP (via kelch repeats); this interaction blocks the assembly of CUL3-KLHL20 complex.

It localises to the cytoplasm. The protein resides in the perinuclear region. Its subcellular location is the nucleus. The protein localises to the golgi apparatus. It is found in the trans-Golgi network. It localises to the cell projection. The protein resides in the axon. Its subcellular location is the dendrite. Its pathway is protein modification; protein ubiquitination. Substrate-specific adapter of a BCR (BTB-CUL3-RBX1) E3 ubiquitin-protein ligase complex involved in interferon response and anterograde Golgi to endosome transport. The BCR(KLHL20) E3 ubiquitin ligase complex mediates the ubiquitination of DAPK1, leading to its degradation by the proteasome, thereby acting as a negative regulator of apoptosis. The BCR(KLHL20) E3 ubiquitin ligase complex also specifically mediates 'Lys-33'-linked ubiquitination. Involved in anterograde Golgi to endosome transport by mediating 'Lys-33'-linked ubiquitination of CORO7, promoting interaction between CORO7 and EPS15, thereby facilitating actin polymerization and post-Golgi trafficking. Also acts as a regulator of endothelial migration during angiogenesis by controlling the activation of Rho GTPases. The BCR(KLHL20) E3 ubiquitin ligase complex acts as a regulator of neurite outgrowth by mediating ubiquitination and degradation of PDZ-RhoGEF/ARHGEF11. This Bos taurus (Bovine) protein is Kelch-like protein 20 (KLHL20).